Here is a 210-residue protein sequence, read N- to C-terminus: 7-carboxy-7-deazaguanine synthase (210 aa).

Residues 12–14 (LQG) and R27 contribute to the substrate site. Residues 18-210 (HAGRASVFCR…VQTHKSLGIR (193 aa)) enclose the Radical SAM core domain. [4Fe-4S] cluster contacts are provided by C31, C46, and C49. Residue T51 participates in Mg(2+) binding. T90 provides a ligand contact to substrate. Residues G92, 133–135 (SPK), and 173–176 (QPMD) contribute to the S-adenosyl-L-methionine site.

The protein belongs to the radical SAM superfamily. 7-carboxy-7-deazaguanine synthase family. As to quaternary structure, homodimer. Requires [4Fe-4S] cluster as cofactor. S-adenosyl-L-methionine is required as a cofactor. The cofactor is Mg(2+).

It catalyses the reaction 6-carboxy-5,6,7,8-tetrahydropterin + H(+) = 7-carboxy-7-deazaguanine + NH4(+). The protein operates within purine metabolism; 7-cyano-7-deazaguanine biosynthesis. Functionally, catalyzes the complex heterocyclic radical-mediated conversion of 6-carboxy-5,6,7,8-tetrahydropterin (CPH4) to 7-carboxy-7-deazaguanine (CDG), a step common to the biosynthetic pathways of all 7-deazapurine-containing compounds. The sequence is that of 7-carboxy-7-deazaguanine synthase from Bradyrhizobium diazoefficiens (strain JCM 10833 / BCRC 13528 / IAM 13628 / NBRC 14792 / USDA 110).